The sequence spans 274 residues: Putative septum site-determining protein MinD (274 aa).

Position 22–29 (22–29 (KGGVGKTT)) interacts with ATP.

It belongs to the ParA family. MinD subfamily.

It is found in the plastid. The protein localises to the chloroplast. Its function is as follows. ATPase required for the correct placement of the division site. The chain is Putative septum site-determining protein MinD (minD-A) from Nephroselmis olivacea (Green alga).